A 238-amino-acid polypeptide reads, in one-letter code: Ribonuclease HII (238 aa).

The region spanning 23–215 (QRLCGVDEAG…VREALARLPM (193 aa)) is the RNase H type-2 domain. Aspartate 29, glutamate 30, and aspartate 124 together coordinate a divalent metal cation.

The protein belongs to the RNase HII family. It depends on Mn(2+) as a cofactor. Requires Mg(2+) as cofactor.

It localises to the cytoplasm. It carries out the reaction Endonucleolytic cleavage to 5'-phosphomonoester.. Endonuclease that specifically degrades the RNA of RNA-DNA hybrids. This Cupriavidus necator (strain ATCC 17699 / DSM 428 / KCTC 22496 / NCIMB 10442 / H16 / Stanier 337) (Ralstonia eutropha) protein is Ribonuclease HII.